Here is a 504-residue protein sequence, read N- to C-terminus: Glutamate--tRNA ligase (504 aa).

The short motif at 27 to 37 is the 'HIGH' region element; the sequence is PSPTGTPHVGL. Positions 271 to 275 match the 'KMSKS' region motif; it reads KLSKR. K274 contributes to the ATP binding site.

Belongs to the class-I aminoacyl-tRNA synthetase family. Glutamate--tRNA ligase type 1 subfamily. As to quaternary structure, monomer.

The protein resides in the cytoplasm. It catalyses the reaction tRNA(Glu) + L-glutamate + ATP = L-glutamyl-tRNA(Glu) + AMP + diphosphate. Its function is as follows. Catalyzes the attachment of glutamate to tRNA(Glu) in a two-step reaction: glutamate is first activated by ATP to form Glu-AMP and then transferred to the acceptor end of tRNA(Glu). The polypeptide is Glutamate--tRNA ligase (Arthrobacter sp. (strain FB24)).